Reading from the N-terminus, the 502-residue chain is Probable cytosol aminopeptidase (502 aa).

The Mn(2+) site is built by K267 and D272. K279 is an active-site residue. Mn(2+)-binding residues include D290, D349, and E351. R353 is a catalytic residue.

This sequence belongs to the peptidase M17 family. Mn(2+) serves as cofactor.

The protein localises to the cytoplasm. The enzyme catalyses Release of an N-terminal amino acid, Xaa-|-Yaa-, in which Xaa is preferably Leu, but may be other amino acids including Pro although not Arg or Lys, and Yaa may be Pro. Amino acid amides and methyl esters are also readily hydrolyzed, but rates on arylamides are exceedingly low.. It catalyses the reaction Release of an N-terminal amino acid, preferentially leucine, but not glutamic or aspartic acids.. Presumably involved in the processing and regular turnover of intracellular proteins. Catalyzes the removal of unsubstituted N-terminal amino acids from various peptides. The polypeptide is Probable cytosol aminopeptidase (Aeromonas hydrophila subsp. hydrophila (strain ATCC 7966 / DSM 30187 / BCRC 13018 / CCUG 14551 / JCM 1027 / KCTC 2358 / NCIMB 9240 / NCTC 8049)).